Consider the following 442-residue polypeptide: SPRY domain-containing protein 3 (442 aa).

One can recognise a B30.2/SPRY domain in the interval 17 to 204 (DLNLHYRFLN…VRLHLNAELG (188 aa)). Positions 371–394 (EGEEEEEEEEEEEDGEEIEPEHEG) are disordered. A compositionally biased stretch (acidic residues) spans 372 to 390 (GEEEEEEEEEEEDGEEIEP).

The chain is SPRY domain-containing protein 3 (SPRYD3) from Homo sapiens (Human).